A 372-amino-acid polypeptide reads, in one-letter code: Heat-inducible transcription repressor HrcA (372 aa).

The interval 300–334 (YGRSGAAGEPAGNDPVGEPETESETESQTNDTEPI) is disordered.

The protein belongs to the HrcA family.

Its function is as follows. Negative regulator of class I heat shock genes (grpE-dnaK-dnaJ and groELS operons). Prevents heat-shock induction of these operons. This chain is Heat-inducible transcription repressor HrcA, found in Bifidobacterium longum (strain NCC 2705).